The primary structure comprises 397 residues: LL-diaminopimelate aminotransferase (397 aa).

Substrate contacts are provided by tyrosine 14 and glycine 41. Pyridoxal 5'-phosphate is bound by residues tyrosine 71, alanine 104–lysine 105, tyrosine 128, asparagine 174, tyrosine 205, and serine 233–serine 235. Substrate-binding residues include lysine 105, tyrosine 128, and asparagine 174. Lysine 236 carries the N6-(pyridoxal phosphate)lysine modification. Positions 244 and 275 each coordinate pyridoxal 5'-phosphate. Positions 275 and 368 each coordinate substrate.

The protein belongs to the class-I pyridoxal-phosphate-dependent aminotransferase family. LL-diaminopimelate aminotransferase subfamily. As to quaternary structure, homodimer. Pyridoxal 5'-phosphate is required as a cofactor.

The catalysed reaction is (2S,6S)-2,6-diaminopimelate + 2-oxoglutarate = (S)-2,3,4,5-tetrahydrodipicolinate + L-glutamate + H2O + H(+). Its pathway is amino-acid biosynthesis; L-lysine biosynthesis via DAP pathway; LL-2,6-diaminopimelate from (S)-tetrahydrodipicolinate (aminotransferase route): step 1/1. Functionally, involved in the synthesis of meso-diaminopimelate (m-DAP or DL-DAP), required for both lysine and peptidoglycan biosynthesis. Catalyzes the direct conversion of tetrahydrodipicolinate to LL-diaminopimelate. In Chlamydia pneumoniae (Chlamydophila pneumoniae), this protein is LL-diaminopimelate aminotransferase.